The primary structure comprises 201 residues: Ribonuclease HII (201 aa).

An RNase H type-2 domain is found at 12 to 201 (DLVAGVDEVG…VRELLDVPVQ (190 aa)). A divalent metal cation is bound by residues aspartate 18, glutamate 19, and aspartate 110.

This sequence belongs to the RNase HII family. Mn(2+) serves as cofactor. It depends on Mg(2+) as a cofactor.

The protein localises to the cytoplasm. The catalysed reaction is Endonucleolytic cleavage to 5'-phosphomonoester.. Endonuclease that specifically degrades the RNA of RNA-DNA hybrids. In Pseudomonas aeruginosa (strain UCBPP-PA14), this protein is Ribonuclease HII.